The following is a 274-amino-acid chain: Large ribosomal subunit protein uL2 (274 aa).

Disordered stretches follow at residues 1–23 (MAIK…SFEE) and 222–242 (GSAM…SPIG).

Belongs to the universal ribosomal protein uL2 family. As to quaternary structure, part of the 50S ribosomal subunit. Forms a bridge to the 30S subunit in the 70S ribosome.

Functionally, one of the primary rRNA binding proteins. Required for association of the 30S and 50S subunits to form the 70S ribosome, for tRNA binding and peptide bond formation. It has been suggested to have peptidyltransferase activity; this is somewhat controversial. Makes several contacts with the 16S rRNA in the 70S ribosome. This is Large ribosomal subunit protein uL2 from Dehalococcoides mccartyi (strain ATCC BAA-2266 / KCTC 15142 / 195) (Dehalococcoides ethenogenes (strain 195)).